The following is a 341-amino-acid chain: Phenylalanine--tRNA ligase alpha subunit (341 aa).

Glutamate 256 contributes to the Mg(2+) binding site.

The protein belongs to the class-II aminoacyl-tRNA synthetase family. Phe-tRNA synthetase alpha subunit type 1 subfamily. As to quaternary structure, tetramer of two alpha and two beta subunits. Mg(2+) is required as a cofactor.

The protein resides in the cytoplasm. It carries out the reaction tRNA(Phe) + L-phenylalanine + ATP = L-phenylalanyl-tRNA(Phe) + AMP + diphosphate + H(+). This is Phenylalanine--tRNA ligase alpha subunit from Chlamydia felis (strain Fe/C-56) (Chlamydophila felis).